A 149-amino-acid chain; its full sequence is Calmodulin (149 aa).

EF-hand domains lie at E8–N43, P44–D79, D81–K116, and L117–K149. Positions 21, 23, 25, 27, 32, 57, 59, 61, 63, 68, 94, 96, 98, and 105 each coordinate Ca(2+). An N6,N6,N6-trimethyllysine modification is found at K116. Positions 130, 132, 134, 136, and 141 each coordinate Ca(2+).

It belongs to the calmodulin family.

Functionally, calmodulin mediates the control of a large number of enzymes, ion channels and other proteins by Ca(2+). Among the enzymes to be stimulated by the calmodulin-Ca(2+) complex are a number of protein kinases and phosphatases. The chain is Calmodulin from Physarum polycephalum (Slime mold).